A 248-amino-acid polypeptide reads, in one-letter code: Aspartate/glutamate leucyltransferase (248 aa).

It belongs to the R-transferase family. Bpt subfamily.

Its subcellular location is the cytoplasm. The enzyme catalyses N-terminal L-glutamyl-[protein] + L-leucyl-tRNA(Leu) = N-terminal L-leucyl-L-glutamyl-[protein] + tRNA(Leu) + H(+). The catalysed reaction is N-terminal L-aspartyl-[protein] + L-leucyl-tRNA(Leu) = N-terminal L-leucyl-L-aspartyl-[protein] + tRNA(Leu) + H(+). Its function is as follows. Functions in the N-end rule pathway of protein degradation where it conjugates Leu from its aminoacyl-tRNA to the N-termini of proteins containing an N-terminal aspartate or glutamate. The chain is Aspartate/glutamate leucyltransferase from Methylobacillus flagellatus (strain ATCC 51484 / DSM 6875 / VKM B-1610 / KT).